A 728-amino-acid polypeptide reads, in one-letter code: MKKTFIFLYCVVLFISTTLAVEMKKTQDFNLRIFDQHPKYNNNFEPENGVLTVNLVKSILNETTGIPELTTMSNLTTVNKQGRIYSPELFKYFFADNSDAPDRNNSGKNYPLDITLTMNLDDKSNYFYDNQEFFPIDGRGFDVDQQFRNYYDDESKANPKPYHNYHFCAKITNSRFTYKGFETFRFVGDDDVWVFIDRKLVVDLGGLHIAQEKTIDLTKLGLVVNKLYVIDFFYCERHTSRSTIRIETTIELQCPWYDFCGVCTGNGLSCCNVTRDCDDGNPCTIDLCPEPTAVFDLKDISANCRHQDRTPTDWSVTDKCNTGKCNVSTGIFVTNITKCIPQNSCKAEDHCDSGLGCIFKNLCTDVCSTGACVDGKCETKNSKICIDELDKGVEDKCYEYSCDPNVGCTKKPRCLQKSENYNPCLNSFCEVSTGECKNTTIPPNLCDCQCDGKLNKCQIKSCNADGSCKPLPSLEIDDKNPCTIDACDETTGVITHTLSNKCGGCSICNGVTGDCDPVDKKCDDGNRCTTEVCLLDKATNNGNCSSKPTTECDKGDVCMVYSCDTEKGCVETPRVCPSKGKCQVGKCVPGVGCKYEPRVCKADAFCLVAECDEIVGCIQFEKKCAADNGRCQAGICKNATATEEGTCESVDFDPKPFICKTAAVVSVGVAVGVAVGGAIALGVFIFAGKKGYDYWKASQGVTMATSNANPLYESNPSGGENPIYTSPN.

A signal peptide spans M1–A20. Residues V21–S666 lie on the Extracellular side of the membrane. 3 N-linked (GlcNAc...) asparagine glycosylation sites follow: N61, N74, and N104. The PA14 domain occupies M118–N266. N272, N326, N335, N438, N543, and N638 each carry an N-linked (GlcNAc...) asparagine glycan. Residues V667–A687 traverse the membrane as a helical segment. At G688 to N728 the chain is on the cytoplasmic side.

The protein belongs to the prespore-cell-inducing factor family.

It is found in the membrane. This Dictyostelium discoideum (Social amoeba) protein is Protein psiK (psiK).